The following is a 267-amino-acid chain: Eukaryotic translation initiation factor 3 subunit J (267 aa).

2 disordered regions span residues methionine 1–leucine 128 and lysine 220–valine 241. Residues aspartate 28 to valine 46 are compositionally biased toward acidic residues. A coiled-coil region spans residues serine 44–serine 96. Basic and acidic residues predominate over residues glutamine 74–glutamate 88. Acidic residues predominate over residues asparagine 90–glutamate 100. Composition is skewed to basic and acidic residues over residues arginine 108–aspartate 121 and lysine 220–asparagine 231.

This sequence belongs to the eIF-3 subunit J family. As to quaternary structure, component of the eukaryotic translation initiation factor 3 (eIF-3) complex.

The protein resides in the cytoplasm. In terms of biological role, component of the eukaryotic translation initiation factor 3 (eIF-3) complex, which is involved in protein synthesis of a specialized repertoire of mRNAs and, together with other initiation factors, stimulates binding of mRNA and methionyl-tRNAi to the 40S ribosome. The eIF-3 complex specifically targets and initiates translation of a subset of mRNAs involved in cell proliferation. The chain is Eukaryotic translation initiation factor 3 subunit J (hcr1) from Neosartorya fischeri (strain ATCC 1020 / DSM 3700 / CBS 544.65 / FGSC A1164 / JCM 1740 / NRRL 181 / WB 181) (Aspergillus fischerianus).